Consider the following 317-residue polypeptide: MAASVTRVLKGAGGRQLLLMVARRRPVLMQPFLLMPRKFWVSSALRSEDQRQPPFSASSTHAETQGHAEEQYQQKQPPPRYTDQAGEESEGYESEEQLQQQILSAALQFVPDFGWSADAIAEGAKSLDMSAAAAGMFEDGGSELILHFVTQCNLQLTELLEKEQKLVQLGTSEKKPTAQFLRDAVEARLRMHIPYIEHWPQALGMLLLPRNIPSSLKLLTAMVDDIWHYAGDQSTDVSWYTRRAVLTGIYNTTELVMLQDSSPDFEDTWKFLENRISEAMTMGDSVKQVASTGEAVIQGLMGAAVTLKNLTGLNQRR.

The transit peptide at 1-46 directs the protein to the mitochondrion; that stretch reads MAASVTRVLKGAGGRQLLLMVARRRPVLMQPFLLMPRKFWVSSALR. A disordered region spans residues 50–97; it reads QRQPPFSASSTHAETQGHAEEQYQQKQPPPRYTDQAGEESEGYESEEQ. The segment covering 53–63 has biased composition (polar residues); that stretch reads PPFSASSTHAE. Residues 85 to 96 are compositionally biased toward acidic residues; the sequence is AGEESEGYESEE. Arginine 243 serves as a coordination point for a 1,2-diacylglycero-3-phosphoethanolamine.

The protein belongs to the COQ9 family. In terms of assembly, homodimer. Heterodimer; two heterodimers of COQ7:COQ9 come together on the same side of the lipid pseudo-bilayer and form a curved tetramer with a hydrophobic surface suitable for membrane interaction. These two tetramers assemble into a soluble octamer with a pseudo-bilayer of lipids captured within. Interacts with COQ7; this interaction allows ubiquinone (CoQ) isoprene intermediates presentation to COQ7 and facilitates the COQ7-mediated hydroxylase step.

The protein resides in the mitochondrion. Its pathway is cofactor biosynthesis; ubiquinone biosynthesis. Its function is as follows. Membrane-associated protein that warps the membrane surface to access and bind aromatic isoprenes with high specificity, including ubiquinone (CoQ) isoprene intermediates and presents them directly to COQ7, therefore facilitating the COQ7-mediated hydroxylase step. Participates in the biosynthesis of coenzyme Q, also named ubiquinone, an essential lipid-soluble electron transporter for aerobic cellular respiration. The sequence is that of Ubiquinone biosynthesis protein COQ9-A, mitochondrial (coq9-a) from Xenopus laevis (African clawed frog).